A 108-amino-acid polypeptide reads, in one-letter code: UPF0145 protein YjfJ (108 aa).

It belongs to the UPF0145 family.

The chain is UPF0145 protein YjfJ (yjfJ) from Lactococcus lactis subsp. lactis (strain IL1403) (Streptococcus lactis).